Consider the following 274-residue polypeptide: Proteasome subunit beta (274 aa).

Residues 1 to 52 constitute a propeptide, removed in mature form; by autocatalysis; sequence MADPLGAAGRLPAVFMTPGTSSFADFLSRSAPHLLPGARSGLPGPVTEVAHG. T53 serves as the catalytic Nucleophile.

Belongs to the peptidase T1B family. The 20S proteasome core is composed of 14 alpha and 14 beta subunits that assemble into four stacked heptameric rings, resulting in a barrel-shaped structure. The two inner rings, each composed of seven catalytic beta subunits, are sandwiched by two outer rings, each composed of seven alpha subunits. The catalytic chamber with the active sites is on the inside of the barrel. Has a gated structure, the ends of the cylinder being occluded by the N-termini of the alpha-subunits. Is capped by the proteasome-associated ATPase, ARC.

Its subcellular location is the cytoplasm. It carries out the reaction Cleavage of peptide bonds with very broad specificity.. The protein operates within protein degradation; proteasomal Pup-dependent pathway. Its activity is regulated as follows. The formation of the proteasomal ATPase ARC-20S proteasome complex, likely via the docking of the C-termini of ARC into the intersubunit pockets in the alpha-rings, may trigger opening of the gate for substrate entry. Interconversion between the open-gate and close-gate conformations leads to a dynamic regulation of the 20S proteasome proteolysis activity. In terms of biological role, component of the proteasome core, a large protease complex with broad specificity involved in protein degradation. In Frankia casuarinae (strain DSM 45818 / CECT 9043 / HFP020203 / CcI3), this protein is Proteasome subunit beta.